A 288-amino-acid chain; its full sequence is Quinate/shikimate dehydrogenase (288 aa).

The substrate site is built by K71 and D107. Residues 132–135, 155–158, K205, 232–235, and G255 contribute to the NAD(+) site; these read AGGA, NRRD, and CVYN.

The protein belongs to the shikimate dehydrogenase family. As to quaternary structure, homodimer.

The enzyme catalyses L-quinate + NAD(+) = 3-dehydroquinate + NADH + H(+). The catalysed reaction is L-quinate + NADP(+) = 3-dehydroquinate + NADPH + H(+). It carries out the reaction shikimate + NADP(+) = 3-dehydroshikimate + NADPH + H(+). It catalyses the reaction shikimate + NAD(+) = 3-dehydroshikimate + NADH + H(+). It functions in the pathway metabolic intermediate biosynthesis; chorismate biosynthesis; chorismate from D-erythrose 4-phosphate and phosphoenolpyruvate: step 4/7. Its function is as follows. The actual biological function of YdiB remains unclear, nor is it known whether 3-dehydroshikimate or quinate represents the natural substrate. Catalyzes the reversible NAD-dependent reduction of both 3-dehydroshikimate (DHSA) and 3-dehydroquinate to yield shikimate (SA) and quinate, respectively. It can use both NAD or NADP for catalysis, however it has higher catalytic efficiency with NAD. This is Quinate/shikimate dehydrogenase from Escherichia coli O157:H7.